A 240-amino-acid polypeptide reads, in one-letter code: MTGPGLRLLAGMGLAGALVLGLSLWLHFDPDQHLPIGSIQITGEPRHADTDAILERVRAHAPGFVGTDLEVLREELQAMPWVDAVQLRRRWPDTLEVHVTEPVPVAQWGDDHLVDRHGRLFGPVDLAEWDFLPALAGEDGRQVVLMHRYLEVSARLADAGFEVVGVHEGKRHDWTIHLADGAEVLMGRDVNLNRLGQLVRAAPALRAREDAPIARVDLRYPHGLAVAWAEEADNDGGNAR.

The Cytoplasmic segment spans residues 1 to 7 (MTGPGLR). A helical transmembrane segment spans residues 8–28 (LLAGMGLAGALVLGLSLWLHF). The Periplasmic segment spans residues 29-240 (DPDQHLPIGS…EADNDGGNAR (212 aa)). In terms of domain architecture, POTRA spans 34-102 (LPIGSIQITG…DTLEVHVTEP (69 aa)).

It belongs to the FtsQ/DivIB family. FtsQ subfamily. As to quaternary structure, part of a complex composed of FtsB, FtsL and FtsQ.

The protein localises to the cell inner membrane. In terms of biological role, essential cell division protein. May link together the upstream cell division proteins, which are predominantly cytoplasmic, with the downstream cell division proteins, which are predominantly periplasmic. May control correct divisome assembly. In Thioalkalivibrio sp. (strain K90mix), this protein is Cell division protein FtsQ.